A 345-amino-acid polypeptide reads, in one-letter code: Methionine import ATP-binding protein MetN 2 (345 aa).

Residues 4–243 (IELRHVKKEF…PQTEIAKRFI (240 aa)) form the ABC transporter domain. 40–47 (GYSGAGKS) is an ATP binding site.

It belongs to the ABC transporter superfamily. Methionine importer (TC 3.A.1.24) family. In terms of assembly, the complex is composed of two ATP-binding proteins (MetN), two transmembrane proteins (MetI) and a solute-binding protein (MetQ).

Its subcellular location is the cell membrane. The catalysed reaction is L-methionine(out) + ATP + H2O = L-methionine(in) + ADP + phosphate + H(+). It catalyses the reaction D-methionine(out) + ATP + H2O = D-methionine(in) + ADP + phosphate + H(+). Its function is as follows. Part of the ABC transporter complex MetNIQ involved in methionine import. Responsible for energy coupling to the transport system. The chain is Methionine import ATP-binding protein MetN 2 from Enterococcus faecalis (strain ATCC 700802 / V583).